The chain runs to 490 residues: Muscarinic acetylcholine receptor M4 (490 aa).

Residues 1–42 are Extracellular-facing; the sequence is MHNLSAQPWQAKMANLTYDNVTLSNRSEVAIQPPTNYKTVEL. Residues asparagine 3, asparagine 15, asparagine 20, and asparagine 25 are each glycosylated (N-linked (GlcNAc...) asparagine). Residues 43-64 traverse the membrane as a helical segment; the sequence is VFIATVTGSLSLVTVVGNILVM. Over 65-78 the chain is Cytoplasmic; that stretch reads LSIKVNRQLQTVNN. A helical membrane pass occupies residues 79–99; it reads YFLFSLACADLIIGVFSMNLY. At 100-116 the chain is on the extracellular side; that stretch reads TVYIIKGYWPLGAVVCD. Cysteine 115 and cysteine 195 are joined by a disulfide. Residues 117–138 traverse the membrane as a helical segment; it reads LWLALDYVVSNASVMNLLIISF. Residues 139-158 are Cytoplasmic-facing; that stretch reads DRYFCVTKPLTYPARRTTKM. A helical membrane pass occupies residues 159-181; sequence AGLMIAAAWILSFILWAPAILFW. Residues 182 to 203 are Extracellular-facing; it reads QFIVGKRTVHERECYIQFLSNP. The helical transmembrane segment at 204 to 226 threads the bilayer; that stretch reads AVTFGTAIAAFYLPVVIMTVLYI. Over 227–412 the chain is Cytoplasmic; that stretch reads HISLASRSRV…AAREKKVTRT (186 aa). Residues 236–250 show a composition bias toward basic residues; it reads VRRHKPESRKERKGK. The disordered stretch occupies residues 236–343; sequence VRRHKPESRK…HPRVNPTSKW (108 aa). A compositionally biased stretch (basic and acidic residues) spans 270–285; the sequence is RAVEVKEEVRNGKVDD. Polar residues-rich tracts occupy residues 287 to 296 and 304 to 314; these read PSAQTEATGQ and NESSTVSMTQT. Residues 413-433 form a helical membrane-spanning segment; the sequence is IFAILLAFILTWTPYNVMVLI. Over 434 to 447 the chain is Extracellular; sequence NTFCETCVPETVWS. Residues 448 to 467 traverse the membrane as a helical segment; it reads IGYWLCYVNSTINPACYALC. Topologically, residues 468–490 are cytoplasmic; it reads NATFKKTFKHLLMCQYRNIGTAR.

Belongs to the G-protein coupled receptor 1 family. Muscarinic acetylcholine receptor subfamily. CHRM4 sub-subfamily. As to expression, expressed in heart and brain.

The protein resides in the cell membrane. Its subcellular location is the postsynaptic cell membrane. In terms of biological role, the muscarinic acetylcholine receptor mediates various cellular responses, including inhibition of adenylate cyclase, breakdown of phosphoinositides and modulation of potassium channels through the action of G proteins. Primary transducing effect is inhibition of adenylate cyclase. May couple to multiple functional responses in cell lines. The polypeptide is Muscarinic acetylcholine receptor M4 (CHRM4) (Gallus gallus (Chicken)).